Here is a 237-residue protein sequence, read N- to C-terminus: Uracil-DNA glycosylase (237 aa).

Asp-77 serves as the catalytic Proton acceptor.

The protein belongs to the uracil-DNA glycosylase (UDG) superfamily. UNG family.

The protein resides in the cytoplasm. The enzyme catalyses Hydrolyzes single-stranded DNA or mismatched double-stranded DNA and polynucleotides, releasing free uracil.. Its function is as follows. Excises uracil residues from the DNA which can arise as a result of misincorporation of dUMP residues by DNA polymerase or due to deamination of cytosine. The protein is Uracil-DNA glycosylase of Acinetobacter baylyi (strain ATCC 33305 / BD413 / ADP1).